The chain runs to 274 residues: uncharacterized protein (274 aa).

This is an uncharacterized protein from Bacillus subtilis (strain 168).